A 443-amino-acid chain; its full sequence is Glucose-6-phosphate isomerase (443 aa).

Glu285 serves as the catalytic Proton donor. Residues His306 and Lys420 contribute to the active site.

It belongs to the GPI family.

The protein resides in the cytoplasm. The catalysed reaction is alpha-D-glucose 6-phosphate = beta-D-fructose 6-phosphate. The protein operates within carbohydrate biosynthesis; gluconeogenesis. It functions in the pathway carbohydrate degradation; glycolysis; D-glyceraldehyde 3-phosphate and glycerone phosphate from D-glucose: step 2/4. Catalyzes the reversible isomerization of glucose-6-phosphate to fructose-6-phosphate. This chain is Glucose-6-phosphate isomerase, found in Staphylococcus aureus (strain USA300).